A 347-amino-acid chain; its full sequence is Quinolinate synthase (347 aa).

Iminosuccinate is bound by residues His47 and Ser68. Position 113 (Cys113) interacts with [4Fe-4S] cluster. Iminosuccinate-binding positions include 139–141 and Ser156; that span reads YAN. Cys200 provides a ligand contact to [4Fe-4S] cluster. Iminosuccinate is bound by residues 226 to 228 and Thr243; that span reads HPE. Residue Cys297 coordinates [4Fe-4S] cluster.

This sequence belongs to the quinolinate synthase family. Type 1 subfamily. [4Fe-4S] cluster serves as cofactor.

The protein localises to the cytoplasm. It catalyses the reaction iminosuccinate + dihydroxyacetone phosphate = quinolinate + phosphate + 2 H2O + H(+). Its pathway is cofactor biosynthesis; NAD(+) biosynthesis; quinolinate from iminoaspartate: step 1/1. Its function is as follows. Catalyzes the condensation of iminoaspartate with dihydroxyacetone phosphate to form quinolinate. This chain is Quinolinate synthase, found in Escherichia coli O157:H7.